We begin with the raw amino-acid sequence, 333 residues long: MNPTLILAAFCLGIASATLTFDHSLEAQWTKWKAMHNRLYGMNEEGWRRAVWEKNMKMIELHNQEYREGKHSFTMAMNAFGDMTSEEFRQVMNGFQNRKPRKGKVFQEPLFYEAPRSVDWREKGYVTPVKNQGQCGSCWAFSATGALEGQMFRKTGRLISLSEQNLVDCSGPQGNEGCNGGLMDYAFQYVQDNGGLDSEESYPYEATEESCKYNPKYSVANDTGFVDIPKQEKALMKAVATVGPISVAIDAGHESFLFYKEGIYFEPDCSSEDMDHGVLVVGYGFESTESDNNKYWLVKNSWGEEWGMGGYVKMAKDRRNHCGIASAASYPTV.

The N-terminal stretch at 1–17 (MNPTLILAAFCLGIASA) is a signal peptide. The propeptide at 18 to 113 (TLTFDHSLEA…KVFQEPLFYE (96 aa)) is activation peptide. Residue glutamate 122 coordinates Zn(2+). 2 disulfide bridges follow: cysteine 135–cysteine 178 and cysteine 169–cysteine 211. Cysteine 138 is a catalytic residue. Positions 163, 184, 199, 205, and 209 each coordinate Zn(2+). An N-linked (GlcNAc...) asparagine glycan is attached at asparagine 221. The Zn(2+) site is built by aspartate 227, aspartate 250, histidine 253, aspartate 273, and aspartate 275. The cysteines at positions 269 and 322 are disulfide-linked. The active site involves histidine 276. Residues 289-291 (ESD) constitute a propeptide that is removed on maturation. Residue asparagine 300 is part of the active site.

The protein belongs to the peptidase C1 family. As to quaternary structure, dimer of a heavy and a light chain linked by disulfide bonds. Interacts with Long isoform of CD74/Ii chain; the interaction stabilizes the conformation of mature CTSL. In terms of processing, during export along the endocytic pathway, pro-CTSL undergoes several proteolytic cleavages to generate the CTSL single-chain and two-chain mature forms, composed of a heavy chain linked to a light chain by disulfide bonds. Autocleavage; produces the single-chain CTSL after cleavage of the propeptide. The cleavage can be intermolecular.

The protein resides in the lysosome. It localises to the apical cell membrane. It is found in the cytoplasmic vesicle. The protein localises to the secretory vesicle. Its subcellular location is the chromaffin granule. The protein resides in the secreted. It localises to the extracellular space. It is found in the nucleus. It catalyses the reaction Specificity close to that of papain. As compared to cathepsin B, cathepsin L exhibits higher activity toward protein substrates, but has little activity on Z-Arg-Arg-NHMec, and no peptidyl-dipeptidase activity.. Inhibited by the propeptide produced by autocleavage. Long isoform of CD74/Ii chain stabilizes the conformation of mature CTSL by binding to its active site and serving as a chaperone to help maintain a pool of mature enzyme in endocytic compartments and extracellular space of APCs. IFNG enhances the conversion into the CTSL mature and active form. Inhibited by CST6. Inhibited by the glycopeptide antibiotic teicoplanin. Inhibited by amantadine. Its function is as follows. Thiol protease important for the overall degradation of proteins in lysosomes. Plays a critical for normal cellular functions such as general protein turnover, antigen processing and bone remodeling. Involved in the solubilization of cross-linked TG/thyroglobulin and in the subsequent release of thyroid hormone thyroxine (T4) by limited proteolysis of TG/thyroglobulin in the thyroid follicle lumen. In neuroendocrine chromaffin cells secretory vesicles, catalyzes the prohormone proenkephalin processing to the active enkephalin peptide neurotransmitter. In thymus, regulates CD4(+) T cell positive selection by generating the major histocompatibility complex class II (MHCII) bound peptide ligands presented by cortical thymic epithelial cells. Also mediates invariant chain processing in cortical thymic epithelial cells. Major elastin-degrading enzyme at neutral pH. Accumulates as a mature and active enzyme in the extracellular space of antigen presenting cells (APCs) to regulate degradation of the extracellular matrix in the course of inflammation. Secreted form generates endostatin from COL18A1. Critical for cardiac morphology and function. Plays an important role in hair follicle morphogenesis and cycling, as well as epidermal differentiation. Required for maximal stimulation of steroidogenesis by TIMP1. In terms of biological role, (Microbial infection) In cells lacking TMPRSS2 expression, facilitates human coronaviruses SARS-CoV and SARS-CoV-2 infections via a slow acid-activated route with the proteolysis of coronavirus spike (S) glycoproteins in lysosome for entry into host cell. Proteolysis within lysosomes is sufficient to activate membrane fusion by coronaviruses SARS-CoV and EMC (HCoV-EMC) S as well as Zaire ebolavirus glycoproteins. Functions in the regulation of cell cycle progression through proteolytic processing of the CUX1 transcription factor. Translation initiation at downstream start sites allows the synthesis of isoforms that are devoid of a signal peptide and localize to the nucleus where they cleave the CUX1 transcription factor and modify its DNA binding properties. This is Procathepsin L from Homo sapiens (Human).